Here is a 522-residue protein sequence, read N- to C-terminus: Bifunctional purine biosynthesis protein PurH (522 aa).

Residues 1–145 (MKPIARALIS…KNHAAVTVIV (145 aa)) enclose the MGS-like domain.

This sequence belongs to the PurH family.

It carries out the reaction (6R)-10-formyltetrahydrofolate + 5-amino-1-(5-phospho-beta-D-ribosyl)imidazole-4-carboxamide = 5-formamido-1-(5-phospho-D-ribosyl)imidazole-4-carboxamide + (6S)-5,6,7,8-tetrahydrofolate. The enzyme catalyses IMP + H2O = 5-formamido-1-(5-phospho-D-ribosyl)imidazole-4-carboxamide. It participates in purine metabolism; IMP biosynthesis via de novo pathway; 5-formamido-1-(5-phospho-D-ribosyl)imidazole-4-carboxamide from 5-amino-1-(5-phospho-D-ribosyl)imidazole-4-carboxamide (10-formyl THF route): step 1/1. Its pathway is purine metabolism; IMP biosynthesis via de novo pathway; IMP from 5-formamido-1-(5-phospho-D-ribosyl)imidazole-4-carboxamide: step 1/1. The protein is Bifunctional purine biosynthesis protein PurH of Nitrosococcus oceani (strain ATCC 19707 / BCRC 17464 / JCM 30415 / NCIMB 11848 / C-107).